The primary structure comprises 491 residues: Ketol-acid reductoisomerase (NADP(+)) (491 aa).

The region spanning 15 to 208 is the KARI N-terminal Rossmann domain; it reads AQLGKCRFMG…GGHRAGVLES (194 aa). NADP(+) contacts are provided by residues 45–48, arginine 68, arginine 76, serine 78, and 108–110; these read CGAQ and DKQ. The active site involves histidine 132. Glycine 158 is an NADP(+) binding site. KARI C-terminal knotted domains lie at 209–344 and 345–484; these read SFVA…TAPQ and YEGK…MTDM. Aspartate 217, glutamate 221, glutamate 389, and glutamate 393 together coordinate Mg(2+). Serine 414 contacts substrate.

Belongs to the ketol-acid reductoisomerase family. It depends on Mg(2+) as a cofactor.

It catalyses the reaction (2R)-2,3-dihydroxy-3-methylbutanoate + NADP(+) = (2S)-2-acetolactate + NADPH + H(+). It carries out the reaction (2R,3R)-2,3-dihydroxy-3-methylpentanoate + NADP(+) = (S)-2-ethyl-2-hydroxy-3-oxobutanoate + NADPH + H(+). The protein operates within amino-acid biosynthesis; L-isoleucine biosynthesis; L-isoleucine from 2-oxobutanoate: step 2/4. It participates in amino-acid biosynthesis; L-valine biosynthesis; L-valine from pyruvate: step 2/4. Its function is as follows. Involved in the biosynthesis of branched-chain amino acids (BCAA). Catalyzes an alkyl-migration followed by a ketol-acid reduction of (S)-2-acetolactate (S2AL) to yield (R)-2,3-dihydroxy-isovalerate. In the isomerase reaction, S2AL is rearranged via a Mg-dependent methyl migration to produce 3-hydroxy-3-methyl-2-ketobutyrate (HMKB). In the reductase reaction, this 2-ketoacid undergoes a metal-dependent reduction by NADPH to yield (R)-2,3-dihydroxy-isovalerate. The protein is Ketol-acid reductoisomerase (NADP(+)) of Escherichia coli (strain ATCC 8739 / DSM 1576 / NBRC 3972 / NCIMB 8545 / WDCM 00012 / Crooks).